The chain runs to 463 residues: ATP-dependent protease ATPase subunit HslU (463 aa).

ATP contacts are provided by residues Ile-19, 61-66 (GVGKTE), Asp-277, Glu-341, and Arg-413.

It belongs to the ClpX chaperone family. HslU subfamily. As to quaternary structure, a double ring-shaped homohexamer of HslV is capped on each side by a ring-shaped HslU homohexamer. The assembly of the HslU/HslV complex is dependent on binding of ATP.

It localises to the cytoplasm. In terms of biological role, ATPase subunit of a proteasome-like degradation complex; this subunit has chaperone activity. The binding of ATP and its subsequent hydrolysis by HslU are essential for unfolding of protein substrates subsequently hydrolyzed by HslV. HslU recognizes the N-terminal part of its protein substrates and unfolds these before they are guided to HslV for hydrolysis. This is ATP-dependent protease ATPase subunit HslU from Bacillus cereus (strain 03BB102).